We begin with the raw amino-acid sequence, 488 residues long: Stromelysin-3 (488 aa).

The N-terminal stretch at 1–31 (MAPAAWLRSAAARALLPPMLLLLLQPPPLLA) is a signal peptide. A propeptide spans 32–97 (RALPPDAHHL…GLSARNRQKR (66 aa)) (activation peptide). The segment at 41 to 93 (LHAERRGPQPWHAALPSSPAPAPATQEAPRPASSLRPPRCGVPDPSDGLSARN) is disordered. Positions 50–79 (PWHAALPSSPAPAPATQEAPRPASSLRPPR) are enriched in low complexity. A Cysteine switch motif is present at residues 78 to 85 (PRCGVPDP). 2 residues coordinate Zn(2+): Cys80 and Asp166. Ca(2+) contacts are provided by Asp171, Gly172, Gly174, and Ile176. Zn(2+) contacts are provided by His179, His192, and His215. Residue Glu216 is part of the active site. Residues His219 and His225 each contribute to the Zn(2+) site. Hemopexin repeat units follow at residues 291–339 (PDAC…WQGL), 340–382 (PSPV…ELGL), 384–432 (RFPV…WRGV), and 433–480 (PSEI…FFGC). Cys294 and Cys480 are disulfide-bonded.

This sequence belongs to the peptidase M10A family. The cofactor is Ca(2+). Zn(2+) serves as cofactor. In terms of processing, the precursor is cleaved by a furin endopeptidase. Specifically expressed in stromal cells of breast carcinomas.

It is found in the secreted. The protein resides in the extracellular space. It localises to the extracellular matrix. May play an important role in the progression of epithelial malignancies. The chain is Stromelysin-3 (MMP11) from Homo sapiens (Human).